Consider the following 369-residue polypeptide: Glutamate 5-kinase (369 aa).

Lys-9 contacts ATP. Residues Ser-49, Asp-136, and Asn-148 each coordinate substrate. Residues 168 to 169 (TD) and 210 to 216 (TGGMLTK) contribute to the ATP site. The PUA domain maps to 275–355 (RGSVYVDEGA…KGVFIHRDDW (81 aa)).

This sequence belongs to the glutamate 5-kinase family.

The protein localises to the cytoplasm. It catalyses the reaction L-glutamate + ATP = L-glutamyl 5-phosphate + ADP. Its pathway is amino-acid biosynthesis; L-proline biosynthesis; L-glutamate 5-semialdehyde from L-glutamate: step 1/2. Its function is as follows. Catalyzes the transfer of a phosphate group to glutamate to form L-glutamate 5-phosphate. The sequence is that of Glutamate 5-kinase from Neisseria meningitidis serogroup C / serotype 2a (strain ATCC 700532 / DSM 15464 / FAM18).